The primary structure comprises 561 residues: MAAEEMHWPVPMKAIGAQNLLTMPGGVAKAGYLHKKGGTQLQLLKWPLRFVIIHKRCVYYFKSSTSASPQGAFSLSGYNRVMRAAEETTSNNVFPFKIIHISKKHRTWFFSASSEEERKSWMALLRREIGHFHEKKDLPLDTSDSSSDTDSFYGAVERPVDISLSPYPTDNEDYEHDDEDDSYLEPDSPEPGRLEDALMHPPAYPPPPVPTPRKPAFSDMPRAHSFTSKGPGPLLPPPPPKHGLPDVGLAAEDSKRDPLCPRRAEPCPRVPATPRRMSDPPLSTMPTAPGLRKPPCFRESASPSPEPWTPGHGACSTSSAAIMATATSRNCDKLKSFHLSPRGPPTSEPPPVPANKPKFLKIAEEDPPREAAMPGLFVPPVAPRPPALKLPVPEAMARPAVLPRPEKPQLPHLQRSPPDGQSFRSFSFEKPRQPSQADTGGDDSDEDYEKVPLPNSVFVNTTESCEVERLFKATSPRGEPQDGLYCIRNSSTKSGKVLVVWDETSNKVRNYRIFEKDSKFYLEGEVLFVSVGSMVEHYHTHVLPSHQSLLLRHPYGYTGPR.

Positions 26 to 130 (GVAKAGYLHK…WMALLRREIG (105 aa)) constitute a PH domain. Disordered stretches follow at residues 160-316 (VDIS…GACS) and 333-451 (KLKS…YEKV). Residues 170–188 (DNEDYEHDDEDDSYLEPDS) are compositionally biased toward acidic residues. Residues Tyr174 and Tyr183 each carry the phosphotyrosine; by SYK modification. The SH3-binding motif lies at 201 to 210 (PPAYPPPPVP). Composition is skewed to pro residues over residues 202 to 213 (PAYPPPPVPTPR) and 233 to 242 (PLLPPPPPKH). The segment covering 252-266 (EDSKRDPLCPRRAEP) has biased composition (basic and acidic residues). Phosphoserine is present on Ser278. A compositionally biased stretch (pro residues) spans 342-354 (RGPPTSEPPPVPA). Ser416 and Ser427 each carry phosphoserine. A Phosphotyrosine; by SYK modification is found at Tyr448. In terms of domain architecture, SH2 spans 457–555 (VFVNTTESCE…HQSLLLRHPY (99 aa)).

Post-translationally, phosphorylated. Phosphorylation at Tyr-448 may stimulate the activity of the LYN kinase. Expressed in a variety of tissues including lung, liver, skeletal muscle, kidney and pancreas.

Its function is as follows. Binds differentially to the SH3 domains of certain proteins of signal transduction pathways. Binds to phosphatidylinositols; linking the hemopoietic tyrosine kinase fes to the cytoplasmic membrane in a phosphorylation dependent mechanism. This chain is SH3 domain-binding protein 2 (SH3BP2), found in Homo sapiens (Human).